Reading from the N-terminus, the 542-residue chain is Berberine bridge enzyme-like 25 (542 aa).

An N-terminal signal peptide occupies residues 1–30 (MGNSKPLPTISCISVFALYFSFYTITLTSS). An intrachain disulfide couples C40 to C104. An N-linked (GlcNAc...) asparagine glycan is attached at N61. One can recognise an FAD-binding PCMH-type domain in the interval 82–258 (TMPKPGFIFK…LSWKIKLVPV (177 aa)). A Pros-8alpha-FAD histidine modification is found at H119. N-linked (GlcNAc...) asparagine glycans are attached at residues N308 and N436.

This sequence belongs to the oxygen-dependent FAD-linked oxidoreductase family. FAD is required as a cofactor.

The protein localises to the secreted. It is found in the cell wall. This Arabidopsis thaliana (Mouse-ear cress) protein is Berberine bridge enzyme-like 25.